A 223-amino-acid polypeptide reads, in one-letter code: uncharacterized protein (223 aa).

4 helical membrane-spanning segments follow: residues 22–42 (LTVGLFVITFFNPGANLFVVV), 59–79 (GVALGDAFYSGLGLFGLATLI), 85–105 (IFSLIRIVGGAYLLWFAWCSM), and 164–184 (MAWAGIVLASIIWRVFLSQAF).

This sequence belongs to the Rht family.

The protein localises to the cell membrane. This is an uncharacterized protein from Escherichia coli (strain K12).